The following is a 139-amino-acid chain: Nucleoside diphosphate kinase (139 aa).

Residues lysine 10, phenylalanine 58, arginine 86, threonine 92, arginine 103, and asparagine 113 each coordinate ATP. Histidine 116 functions as the Pros-phosphohistidine intermediate in the catalytic mechanism.

This sequence belongs to the NDK family. Homotetramer. Requires Mg(2+) as cofactor.

Its subcellular location is the cytoplasm. The catalysed reaction is a 2'-deoxyribonucleoside 5'-diphosphate + ATP = a 2'-deoxyribonucleoside 5'-triphosphate + ADP. It carries out the reaction a ribonucleoside 5'-diphosphate + ATP = a ribonucleoside 5'-triphosphate + ADP. Major role in the synthesis of nucleoside triphosphates other than ATP. The ATP gamma phosphate is transferred to the NDP beta phosphate via a ping-pong mechanism, using a phosphorylated active-site intermediate. The polypeptide is Nucleoside diphosphate kinase (Caulobacter vibrioides (strain ATCC 19089 / CIP 103742 / CB 15) (Caulobacter crescentus)).